Reading from the N-terminus, the 201-residue chain is Xanthine phosphoribosyltransferase (201 aa).

Leu20 and Asn27 together coordinate xanthine. 129–133 (ANGQA) is a 5-phospho-alpha-D-ribose 1-diphosphate binding site. Lys157 provides a ligand contact to xanthine.

Belongs to the purine/pyrimidine phosphoribosyltransferase family. Xpt subfamily. In terms of assembly, homodimer.

Its subcellular location is the cytoplasm. It carries out the reaction XMP + diphosphate = xanthine + 5-phospho-alpha-D-ribose 1-diphosphate. It functions in the pathway purine metabolism; XMP biosynthesis via salvage pathway; XMP from xanthine: step 1/1. Its function is as follows. Converts the preformed base xanthine, a product of nucleic acid breakdown, to xanthosine 5'-monophosphate (XMP), so it can be reused for RNA or DNA synthesis. In Shouchella clausii (strain KSM-K16) (Alkalihalobacillus clausii), this protein is Xanthine phosphoribosyltransferase.